The sequence spans 235 residues: Small ribosomal subunit protein uS2 (235 aa).

It belongs to the universal ribosomal protein uS2 family.

The polypeptide is Small ribosomal subunit protein uS2 (Synechococcus sp. (strain RCC307)).